A 290-amino-acid polypeptide reads, in one-letter code: Proteasome subunit beta (290 aa).

The propeptide at 1–58 (MTTSGGLTGPGAFGRLPQPFHQPGITSFVEFLALQAPDLLPGRLQMPAGGQPPEVPHG) is removed in mature form; by autocatalysis. The active-site Nucleophile is T59.

The protein belongs to the peptidase T1B family. The 20S proteasome core is composed of 14 alpha and 14 beta subunits that assemble into four stacked heptameric rings, resulting in a barrel-shaped structure. The two inner rings, each composed of seven catalytic beta subunits, are sandwiched by two outer rings, each composed of seven alpha subunits. The catalytic chamber with the active sites is on the inside of the barrel. Has a gated structure, the ends of the cylinder being occluded by the N-termini of the alpha-subunits. Is capped by the proteasome-associated ATPase, ARC.

The protein localises to the cytoplasm. It catalyses the reaction Cleavage of peptide bonds with very broad specificity.. It functions in the pathway protein degradation; proteasomal Pup-dependent pathway. With respect to regulation, the formation of the proteasomal ATPase ARC-20S proteasome complex, likely via the docking of the C-termini of ARC into the intersubunit pockets in the alpha-rings, may trigger opening of the gate for substrate entry. Interconversion between the open-gate and close-gate conformations leads to a dynamic regulation of the 20S proteasome proteolysis activity. In terms of biological role, component of the proteasome core, a large protease complex with broad specificity involved in protein degradation. The protein is Proteasome subunit beta of Acidothermus cellulolyticus (strain ATCC 43068 / DSM 8971 / 11B).